The primary structure comprises 313 residues: Methionyl-tRNA formyltransferase (313 aa).

113-116 contacts (6S)-5,6,7,8-tetrahydrofolate; sequence SLLP.

The protein belongs to the Fmt family.

It carries out the reaction L-methionyl-tRNA(fMet) + (6R)-10-formyltetrahydrofolate = N-formyl-L-methionyl-tRNA(fMet) + (6S)-5,6,7,8-tetrahydrofolate + H(+). Functionally, attaches a formyl group to the free amino group of methionyl-tRNA(fMet). The formyl group appears to play a dual role in the initiator identity of N-formylmethionyl-tRNA by promoting its recognition by IF2 and preventing the misappropriation of this tRNA by the elongation apparatus. This chain is Methionyl-tRNA formyltransferase, found in Francisella tularensis subsp. tularensis (strain FSC 198).